The chain runs to 1262 residues: Tau-tubulin kinase homolog Asator (1262 aa).

Positions Asn-13–Ser-35 are disordered. Over residues Gly-20–Ser-35 the composition is skewed to polar residues. A Protein kinase domain is found at Trp-173–Met-436. Residues Ile-179 to Ile-187 and Lys-202 contribute to the ATP site. The active-site Proton acceptor is the Asp-293. Disordered regions lie at residues Thr-662 to Ala-724, Arg-755 to Ser-792, and Lys-984 to Arg-1003. The span at Lys-667 to Lys-679 shows a compositional bias: basic and acidic residues. The span at Arg-755–Ser-776 shows a compositional bias: polar residues.

It belongs to the protein kinase superfamily. CK1 Ser/Thr protein kinase family. Interacts with Mgtor. Requires Mg(2+) as cofactor. Detected in larval brain.

The protein localises to the cytoplasm. The protein resides in the cytoskeleton. It localises to the spindle. It carries out the reaction L-seryl-[protein] + ATP = O-phospho-L-seryl-[protein] + ADP + H(+). The enzyme catalyses L-threonyl-[protein] + ATP = O-phospho-L-threonyl-[protein] + ADP + H(+). In terms of biological role, probable serine/threonine protein kinase. This Drosophila melanogaster (Fruit fly) protein is Tau-tubulin kinase homolog Asator.